The following is a 361-amino-acid chain: Replication-associated protein (361 aa).

Positions 1-31 are disordered; sequence MSSLPVSESEGEGSGTSVQVPSRGGQVTPGE. Positions 35–138 constitute a CRESS-DNA virus Rep endonuclease domain; that stretch reads SLRTKHVFLT…PESSWEFGKF (104 aa). The short motif at 42–45 is the RCR-1 element; that stretch reads FLTY. Residues glutamate 76, histidine 84, and histidine 86 each contribute to the a divalent metal cation site. An RCR-2 motif is present at residues 84 to 86; that stretch reads HLH. The active-site For DNA cleavage activity is tyrosine 124. The RCR-3 signature appears at 124–127; it reads YCMK. Positions 192–204 are oligomerization; it reads SANALFPDPPQTY. 243-250 contacts ATP; that stretch reads GPTRTGKT. Residues 266–285 are transactivation; sequence VNFLEEWNCQAQFNIIDDIP. Positions 307-317 match the Nuclear localization signal motif; that stretch reads KYGKKKRIPNG.

It belongs to the geminiviridae Rep protein family. As to quaternary structure, homooligomer. Rep binds to repeated DNA motifs (iterons). Forms the O-complex, which is a Rep-DNA complex involved in the initiation of RCR. Part of the C- and V-complexes which are RepA-Rep-DNA complexes involved in the c-sense and v-sense transcription. The cofactor is Mg(2+). Requires Mn(2+) as cofactor.

It localises to the host nucleus. Essential for the replication of viral ssDNA. The closed circular ssDNA genome is first converted to a superhelical dsDNA. Rep binds a specific region at the genome origin of replication. It introduces an endonucleolytic nick within the conserved sequence 5'-TAATATTAC-3' in the intergenic region of the genome present in all geminiviruses, thereby initiating the rolling circle replication (RCR). Following cleavage, binds covalently to the 5'-phosphate of DNA as a tyrosyl ester. The cleavage gives rise to a free 3'-OH that serves as a primer for the cellular DNA polymerase. The polymerase synthesizes the (+) strand DNA by rolling circle mechanism. After one round of replication, a Rep-catalyzed nucleotidyl transfer reaction releases a circular single-stranded virus genome, thereby terminating the replication. Displays origin-specific DNA cleavage, nucleotidyl transferase, ATPase and helicase activities. Acts as an inhibitor of C-sense gene transcription. This Avena sativa (Oat) protein is Replication-associated protein.